A 175-amino-acid polypeptide reads, in one-letter code: Ribosome maturation factor RimM (175 aa).

Residues Glu96–Phe175 enclose the PRC barrel domain.

Belongs to the RimM family. As to quaternary structure, binds ribosomal protein uS19.

It localises to the cytoplasm. Its function is as follows. An accessory protein needed during the final step in the assembly of 30S ribosomal subunit, possibly for assembly of the head region. Essential for efficient processing of 16S rRNA. May be needed both before and after RbfA during the maturation of 16S rRNA. It has affinity for free ribosomal 30S subunits but not for 70S ribosomes. The sequence is that of Ribosome maturation factor RimM from Psychromonas ingrahamii (strain DSM 17664 / CCUG 51855 / 37).